The primary structure comprises 171 residues: Co-chaperone protein HscB homolog (171 aa).

Residues 2–74 (NHFELFGLPS…ISRAEYILAE (73 aa)) enclose the J domain.

This sequence belongs to the HscB family. As to quaternary structure, interacts with HscA and stimulates its ATPase activity.

Its function is as follows. Co-chaperone involved in the maturation of iron-sulfur cluster-containing proteins. Seems to help targeting proteins to be folded toward HscA. The chain is Co-chaperone protein HscB homolog from Vibrio campbellii (strain ATCC BAA-1116).